The chain runs to 870 residues: Protein csx2 (870 aa).

A disordered region spans residues 212 to 251; sequence TSPEISDAPPLSGNVDPLPINSPPLTNPVARDIDQTEPED. Positions 510–614 constitute a PH domain; it reads TSAKQGLLLA…WIEAIQYSIS (105 aa). A phosphoserine mark is found at Ser-625, Ser-653, and Ser-655. The disordered stretch occupies residues 647-672; it reads RVASVTSPSRHNSDSKEKKQTKSPSL. A compositionally biased stretch (basic and acidic residues) spans 657–666; the sequence is HNSDSKEKKQ. Residues 670-791 form the Arf-GAP domain; the sequence is PSLVKTLKEM…RFIKSSFSHD (122 aa). The C4-type zinc-finger motif lies at 686 to 710; that stretch reads CADCNTTARVEWCAINFPVVLCIDC.

This Schizosaccharomyces pombe (strain 972 / ATCC 24843) (Fission yeast) protein is Protein csx2 (csx2).